The chain runs to 121 residues: Large ribosomal subunit protein bL20 (121 aa).

The protein belongs to the bacterial ribosomal protein bL20 family.

Binds directly to 23S ribosomal RNA and is necessary for the in vitro assembly process of the 50S ribosomal subunit. It is not involved in the protein synthesizing functions of that subunit. This Chlamydia caviae (strain ATCC VR-813 / DSM 19441 / 03DC25 / GPIC) (Chlamydophila caviae) protein is Large ribosomal subunit protein bL20.